A 245-amino-acid polypeptide reads, in one-letter code: DNA repair protein RecO (245 aa).

The protein belongs to the RecO family.

Involved in DNA repair and RecF pathway recombination. This chain is DNA repair protein RecO, found in Klebsiella pneumoniae subsp. pneumoniae (strain ATCC 700721 / MGH 78578).